Here is a 359-residue protein sequence, read N- to C-terminus: Fructose-bisphosphate aldolase (359 aa).

S50 is a D-glyceraldehyde 3-phosphate binding site. D83 (proton donor) is an active-site residue. Residues H84, D105, E142, and H198 each coordinate Zn(2+). G199 contacts dihydroxyacetone phosphate. Zn(2+) is bound at residue H232. Dihydroxyacetone phosphate contacts are provided by residues 233–235 (GSS) and 275–278 (NIDT).

Belongs to the class II fructose-bisphosphate aldolase family. Homodimer. Zn(2+) is required as a cofactor.

It catalyses the reaction beta-D-fructose 1,6-bisphosphate = D-glyceraldehyde 3-phosphate + dihydroxyacetone phosphate. It participates in carbohydrate biosynthesis; Calvin cycle. The protein operates within carbohydrate degradation; glycolysis; D-glyceraldehyde 3-phosphate and glycerone phosphate from D-glucose: step 4/4. Functionally, catalyzes the aldol condensation of dihydroxyacetone phosphate (DHAP or glycerone-phosphate) with glyceraldehyde 3-phosphate (G3P) to form fructose 1,6-bisphosphate (FBP) in gluconeogenesis and the reverse reaction in glycolysis. This chain is Fructose-bisphosphate aldolase (cbbA), found in Rhizobium meliloti (strain 1021) (Ensifer meliloti).